A 394-amino-acid polypeptide reads, in one-letter code: Phosphoglycerate kinase (394 aa).

Residues 21-23 (DFN), Arg36, 59-62 (HLGR), Arg118, and Arg151 each bind substrate. Position 183 is a phosphoserine (Ser183). Residues Lys201 and Gly292 each coordinate ATP. Position 299 is a phosphothreonine (Thr299). ATP is bound by residues Glu323 and 350 to 353 (GGDS).

It belongs to the phosphoglycerate kinase family. As to quaternary structure, monomer.

Its subcellular location is the cytoplasm. The catalysed reaction is (2R)-3-phosphoglycerate + ATP = (2R)-3-phospho-glyceroyl phosphate + ADP. The protein operates within carbohydrate degradation; glycolysis; pyruvate from D-glyceraldehyde 3-phosphate: step 2/5. This Bacillus anthracis (strain A0248) protein is Phosphoglycerate kinase.